The chain runs to 428 residues: MNYLFKDGRYMNEEGKIVATDLLVQDGKIAKVAENITADNAEVIDVNGKLIAPGLVDVHVHLREPGGEHKETIETGTLAAAKGGFTTICAMPNTRPVPDCREHMEDLQNRIKEKAHVNVLPYGAITVRQAGSEMTDFETLKELGAFAFTDDGVGVQDASMMLAAMKRAAKLNMAVVAHCEENTLINKGCVHEGKFSEKHGLNGIPSVCESVHIARDILLAEAADCHYHVCHVSTKGSVRVIRDAKRAGIKVTAEVTPHHLVLCEDDIPSADPNFKMNPPLRGKEDHAALIEGLLDGTIDMIATDHAPHTAEEKAQGIERAPFGITGFETAFPLLYTNLVKKGIITLEQLIQFLTEKPADTFGLEAGRLKEGRTADITIIDLEQEEEIDPTTFLSKGKNTPFAGWKCQGWPVMTIVGGKIAWQKESALV.

Zn(2+)-binding residues include H59 and H61. Substrate contacts are provided by residues 61–63 (HLR) and N93. D151, H178, and H231 together coordinate Zn(2+). Residue N277 participates in substrate binding. D304 is a binding site for Zn(2+). D304 is an active-site residue. Residues H308 and 322–323 (FG) contribute to the substrate site.

The protein belongs to the metallo-dependent hydrolases superfamily. DHOase family. Class I DHOase subfamily. It depends on Zn(2+) as a cofactor.

The catalysed reaction is (S)-dihydroorotate + H2O = N-carbamoyl-L-aspartate + H(+). It functions in the pathway pyrimidine metabolism; UMP biosynthesis via de novo pathway; (S)-dihydroorotate from bicarbonate: step 3/3. Functionally, catalyzes the reversible cyclization of carbamoyl aspartate to dihydroorotate. This Bacillus cereus (strain AH187) protein is Dihydroorotase.